Reading from the N-terminus, the 168-residue chain is Phosphopantetheine adenylyltransferase (168 aa).

S8 contributes to the substrate binding site. Residues 8–9 (SF) and H16 each bind ATP. The substrate site is built by K40, T72, and R86. ATP-binding positions include 87–89 (GLR), E97, and 122–128 (YSFLSSS).

This sequence belongs to the bacterial CoaD family. As to quaternary structure, homohexamer. It depends on Mg(2+) as a cofactor.

The protein localises to the cytoplasm. The catalysed reaction is (R)-4'-phosphopantetheine + ATP + H(+) = 3'-dephospho-CoA + diphosphate. It functions in the pathway cofactor biosynthesis; coenzyme A biosynthesis; CoA from (R)-pantothenate: step 4/5. Its function is as follows. Reversibly transfers an adenylyl group from ATP to 4'-phosphopantetheine, yielding dephospho-CoA (dPCoA) and pyrophosphate. This Thermosynechococcus vestitus (strain NIES-2133 / IAM M-273 / BP-1) protein is Phosphopantetheine adenylyltransferase.